Consider the following 231-residue polypeptide: 7-cyano-7-deazaguanine synthase (231 aa).

ATP is bound at residue 7 to 17 (LSSGLDSVAAL). 4 residues coordinate Zn(2+): Cys195, Cys203, Cys206, and Cys209.

The protein belongs to the QueC family. Requires Zn(2+) as cofactor.

The catalysed reaction is 7-carboxy-7-deazaguanine + NH4(+) + ATP = 7-cyano-7-deazaguanine + ADP + phosphate + H2O + H(+). It functions in the pathway purine metabolism; 7-cyano-7-deazaguanine biosynthesis. Catalyzes the ATP-dependent conversion of 7-carboxy-7-deazaguanine (CDG) to 7-cyano-7-deazaguanine (preQ(0)). The chain is 7-cyano-7-deazaguanine synthase from Methanosarcina barkeri (strain Fusaro / DSM 804).